Reading from the N-terminus, the 400-residue chain is Cytoplasmic tRNA 2-thiolation protein 2 (400 aa).

Belongs to the CTU2/NCS2 family.

Its subcellular location is the cytoplasm. The protein operates within tRNA modification; 5-methoxycarbonylmethyl-2-thiouridine-tRNA biosynthesis. Functionally, plays a central role in 2-thiolation of mcm(5)S(2)U at tRNA wobble positions of tRNA(Lys), tRNA(Glu) and tRNA(Gln). May act by forming a heterodimer with NCS6/CTU1 that ligates sulfur from thiocarboxylated URM1 onto the uridine of tRNAs at wobble position. This Drosophila virilis (Fruit fly) protein is Cytoplasmic tRNA 2-thiolation protein 2.